Reading from the N-terminus, the 31-residue chain is Photosystem II reaction center protein T (31 aa).

The chain crosses the membrane as a helical span at residues 3-23; it reads SAAYILVLALALGVIFFAIAF.

The protein belongs to the PsbT family. In terms of assembly, PSII is composed of 1 copy each of membrane proteins PsbA, PsbB, PsbC, PsbD, PsbE, PsbF, PsbH, PsbI, PsbJ, PsbK, PsbL, PsbM, PsbT, PsbX, PsbY, PsbZ, Psb30/Ycf12, peripheral proteins PsbO, CyanoQ (PsbQ), PsbU, PsbV and a large number of cofactors. It forms dimeric complexes.

The protein resides in the cellular thylakoid membrane. In terms of biological role, found at the monomer-monomer interface of the photosystem II (PS II) dimer, plays a role in assembly and dimerization of PSII. PSII is a light-driven water plastoquinone oxidoreductase, using light energy to abstract electrons from H(2)O, generating a proton gradient subsequently used for ATP formation. The polypeptide is Photosystem II reaction center protein T (Trichodesmium erythraeum (strain IMS101)).